The chain runs to 828 residues: Hapless 2 (828 aa).

The N-terminal stretch at 1–32 is a signal peptide; sequence MKNKLINLRSKHIYKLIIIIFFCIILKYYKWC. The Extracellular segment spans residues 33 to 680; sequence DFKNKVFFIQ…INTVKTLIGK (648 aa). Cysteines 53 and 62 form a disulfide. N-linked (GlcNAc...) asparagine glycosylation is present at N74. 4 disulfide bridges follow: C142–C209, C170–C381, C172–C191, and C363–C388. Positions 174–191 are cd loop; involved in gamete fusion; that stretch reads TYNYFKDDEFIKRAKLKC. N233, N250, N264, N293, and N333 each carry an N-linked (GlcNAc...) asparagine glycan. N-linked (GlcNAc...) asparagine glycans are attached at residues N479, N516, N531, and N539. A disulfide bond links C546 and C592. Residues 681–701 form a helical membrane-spanning segment; sequence FAIIAILIILAPALIPLLPFF. The Cytoplasmic portion of the chain corresponds to 702–828; that stretch reads LNFFFLFIST…SGKSKIPPLR (127 aa). The tract at residues 773 to 828 is disordered; sequence RKNKKKFNKNNISSNIKHKKGGKKVKQKEPNRNSNHTSHEYADTSPSGKSKIPPLR. Positions 788-798 are enriched in basic residues; sequence IKHKKGGKKVK. Positions 799-814 are enriched in basic and acidic residues; that stretch reads QKEPNRNSNHTSHEYA.

This sequence belongs to the HAP2/GCS1 family.

The protein localises to the cell membrane. Its function is as follows. During fertilization, required on male gametes for their fusion with female gametes, and for subsequent ookinete formation in the host. Thereby, required for mosquito-mediated transmission to other animals. Probably initiates the fusion of gamete cell membranes by inserting part of its extracellular domain into the cell membrane of a female gamete. This chain is Hapless 2, found in Plasmodium berghei (strain Anka).